We begin with the raw amino-acid sequence, 193 residues long: Probable nicotinate-nucleotide adenylyltransferase (193 aa).

The protein belongs to the NadD family.

The enzyme catalyses nicotinate beta-D-ribonucleotide + ATP + H(+) = deamido-NAD(+) + diphosphate. The protein operates within cofactor biosynthesis; NAD(+) biosynthesis; deamido-NAD(+) from nicotinate D-ribonucleotide: step 1/1. Catalyzes the reversible adenylation of nicotinate mononucleotide (NaMN) to nicotinic acid adenine dinucleotide (NaAD). The polypeptide is Probable nicotinate-nucleotide adenylyltransferase (Endomicrobium trichonymphae).